We begin with the raw amino-acid sequence, 366 residues long: MSLYIGLMSGTSMDGIDAALLELPSNQLIHGITKQYSDDVRRNLDDLIMGNHLTLASICQLNTLIGREFAEAVRQLLIEIKVHPKEIQAIGSHGQTVCHDTSGNIPYTLQLGCGHTISSLTGITVVADFRTRDLVNGGQGAPFAPLYHQQIFSKVNESVAVVNIGGIANVTFIAKNQMTRGWDIGPGNCLMDAWIYKNKGAPFDKSGVWASQGEVIHPLLEYLLQDPFFHLDSPKSIGKEYFSLSWLQKHLKPDYTPADIQATLLALTAHTIAETILNESEEIKQLYLCGGGAHNTHLKENLARLLPGITVKSIAELGISPDYLEAMMFAWLAAQTINQIPVNLTSITGAKGIAILGAVYPIIKSY.

10–17 provides a ligand contact to ATP; the sequence is GTSMDGID.

It belongs to the anhydro-N-acetylmuramic acid kinase family.

The catalysed reaction is 1,6-anhydro-N-acetyl-beta-muramate + ATP + H2O = N-acetyl-D-muramate 6-phosphate + ADP + H(+). It participates in amino-sugar metabolism; 1,6-anhydro-N-acetylmuramate degradation. Its pathway is cell wall biogenesis; peptidoglycan recycling. In terms of biological role, catalyzes the specific phosphorylation of 1,6-anhydro-N-acetylmuramic acid (anhMurNAc) with the simultaneous cleavage of the 1,6-anhydro ring, generating MurNAc-6-P. Is required for the utilization of anhMurNAc either imported from the medium or derived from its own cell wall murein, and thus plays a role in cell wall recycling. This chain is Anhydro-N-acetylmuramic acid kinase, found in Legionella pneumophila (strain Corby).